The sequence spans 246 residues: Acetoacetate decarboxylase (246 aa).

Lys115 acts as the Schiff-base intermediate with acetoacetate in catalysis.

It belongs to the ADC family.

The enzyme catalyses acetoacetate + H(+) = acetone + CO2. In terms of biological role, catalyzes the conversion of acetoacetate to acetone and carbon dioxide. The protein is Acetoacetate decarboxylase of Clostridium beijerinckii (strain ATCC 51743 / NCIMB 8052) (Clostridium acetobutylicum).